Reading from the N-terminus, the 203-residue chain is Glycerol-3-phosphate acyltransferase (203 aa).

Transmembrane regions (helical) follow at residues 12–32 (ATLL…GLIL), 66–86 (TLLL…LWGV), 88–108 (AGIA…WLSF), 118–138 (IGVL…IWLA), and 159–179 (IALY…MTVI).

This sequence belongs to the PlsY family. In terms of assembly, probably interacts with PlsX.

It localises to the cell inner membrane. It carries out the reaction an acyl phosphate + sn-glycerol 3-phosphate = a 1-acyl-sn-glycero-3-phosphate + phosphate. Its pathway is lipid metabolism; phospholipid metabolism. Its function is as follows. Catalyzes the transfer of an acyl group from acyl-phosphate (acyl-PO(4)) to glycerol-3-phosphate (G3P) to form lysophosphatidic acid (LPA). This enzyme utilizes acyl-phosphate as fatty acyl donor, but not acyl-CoA or acyl-ACP. The polypeptide is Glycerol-3-phosphate acyltransferase (Sinorhizobium fredii (strain NBRC 101917 / NGR234)).